A 288-amino-acid chain; its full sequence is Shikimate dehydrogenase (NADP(+)) (288 aa).

Residues 15-17 (SKS) and threonine 64 each bind shikimate. Lysine 68 acts as the Proton acceptor in catalysis. Glutamate 83 contributes to the NADP(+) binding site. The shikimate site is built by asparagine 92 and aspartate 117. NADP(+) is bound by residues 141-145 (GAGGA), 165-170 (NRTVSK), and methionine 232. Tyrosine 234 contributes to the shikimate binding site. Glycine 254 contacts NADP(+).

It belongs to the shikimate dehydrogenase family. As to quaternary structure, homodimer.

The catalysed reaction is shikimate + NADP(+) = 3-dehydroshikimate + NADPH + H(+). It participates in metabolic intermediate biosynthesis; chorismate biosynthesis; chorismate from D-erythrose 4-phosphate and phosphoenolpyruvate: step 4/7. Functionally, involved in the biosynthesis of the chorismate, which leads to the biosynthesis of aromatic amino acids. Catalyzes the reversible NADPH linked reduction of 3-dehydroshikimate (DHSA) to yield shikimate (SA). This is Shikimate dehydrogenase (NADP(+)) from Psychrobacter cryohalolentis (strain ATCC BAA-1226 / DSM 17306 / VKM B-2378 / K5).